The sequence spans 377 residues: Alternative oxidase, mitochondrial (377 aa).

The helical transmembrane segment at 149–169 (LSRFIFLESIAAVPGMVAGML) threads the bilayer. Fe cation is bound by residues E156, E195, and H198. Residues 214-234 (ILIIGAQGVYFNAMFVAYLIS) form a helical membrane-spanning segment. Fe cation contacts are provided by E246, E303, and H306.

Belongs to the alternative oxidase family. Fe cation serves as cofactor.

Its subcellular location is the mitochondrion inner membrane. Catalyzes cyanide-resistant oxygen consumption. May increase respiration when the cytochrome respiratory pathway is restricted, or in response to low temperatures. The protein is Alternative oxidase, mitochondrial (AOX1) of Pyricularia oryzae (strain 70-15 / ATCC MYA-4617 / FGSC 8958) (Rice blast fungus).